The chain runs to 445 residues: Proline--tRNA ligase (445 aa).

The protein belongs to the class-II aminoacyl-tRNA synthetase family. ProS type 2 subfamily. Homodimer.

It is found in the cytoplasm. It catalyses the reaction tRNA(Pro) + L-proline + ATP = L-prolyl-tRNA(Pro) + AMP + diphosphate. In terms of biological role, catalyzes the attachment of proline to tRNA(Pro) in a two-step reaction: proline is first activated by ATP to form Pro-AMP and then transferred to the acceptor end of tRNA(Pro). This is Proline--tRNA ligase from Cereibacter sphaeroides (strain ATCC 17025 / ATH 2.4.3) (Rhodobacter sphaeroides).